Here is a 308-residue protein sequence, read N- to C-terminus: Transcription initiation factor IIB (308 aa).

Repeat copies occupy residues 124–207 (NELE…LREL) and 218–299 (DYVT…ELTQ).

Belongs to the TFIIB family.

Stabilizes TBP binding to an archaeal box-A promoter. Also responsible for recruiting RNA polymerase II to the pre-initiation complex (DNA-TBP-TFIIB). In Sulfurisphaera tokodaii (strain DSM 16993 / JCM 10545 / NBRC 100140 / 7) (Sulfolobus tokodaii), this protein is Transcription initiation factor IIB.